Here is a 223-residue protein sequence, read N- to C-terminus: DNA mismatch repair protein MutH (223 aa).

The protein belongs to the MutH family.

It is found in the cytoplasm. In terms of biological role, sequence-specific endonuclease that cleaves unmethylated GATC sequences. It is involved in DNA mismatch repair. The protein is DNA mismatch repair protein MutH of Shewanella sp. (strain MR-7).